Here is a 257-residue protein sequence, read N- to C-terminus: MPKIGIIGGSGVYGIFEPKETVKVHTPYGRPSAPVEIGEIEGVEVAFIPRHGKYHEFPPHEVPYRANIWALHELGVERVIAVNAVGSLKEEYKPGDIVIIDQFIDFTKKREYTFYNGPRVAHISMADPFCPELRRIFIETAKELNLPVHEKGTYICIEGPRFSTRAESRMFRQFADVIGMTLVPEVNLARELGMCYVNISTVTDYDVWAEKPVDAQEVLRVMKENEEKVQKLLKRAIPKIPEERKCGCADVLKTMFV.

Phosphate-binding positions include Ser-10 and 50–51 (RH). Cys-130 and Cys-195 form a disulfide bridge. A substrate-binding site is contributed by Met-180. Thr-181 provides a ligand contact to phosphate. Substrate is bound at residue 204 to 206 (DYD). Residues Cys-246 and Cys-248 are joined by a disulfide bond.

Belongs to the PNP/MTAP phosphorylase family. MTAP subfamily. In terms of assembly, homohexamer. Dimer of a homotrimer.

It catalyses the reaction S-methyl-5'-thioadenosine + phosphate = 5-(methylsulfanyl)-alpha-D-ribose 1-phosphate + adenine. It functions in the pathway amino-acid biosynthesis; L-methionine biosynthesis via salvage pathway; S-methyl-5-thio-alpha-D-ribose 1-phosphate from S-methyl-5'-thioadenosine (phosphorylase route): step 1/1. In terms of biological role, catalyzes the reversible phosphorylation of S-methyl-5'-thioadenosine (MTA) to adenine and 5-methylthioribose-1-phosphate. Involved in the breakdown of MTA, a major by-product of polyamine biosynthesis. Responsible for the first step in the methionine salvage pathway after MTA has been generated from S-adenosylmethionine. Has broad substrate specificity with 6-aminopurine nucleosides as preferred substrates. This is S-methyl-5'-thioadenosine phosphorylase from Pyrococcus furiosus (strain ATCC 43587 / DSM 3638 / JCM 8422 / Vc1).